The primary structure comprises 374 residues: MAAPALGPARGCGAELTLVLLLSLFLLLGWAAGGEEAGPEAGAPSLVGSCGCGNPQRPGAQGSSAAAHRYSREANAPGSVPGGRPSPPTKMVPIPAGVFTMGTDDPQIKQDGEAPARRVAIDAFYMDAYEVSNAEFEKFVNSTGYLTEAEKFGDSFVFEGMLSEQVKSDIQQAVAAAPWWLPVKGANWRHPEGPDSTVLHRPDHPVLHVSWNDAVAYCTWAGKRLPTEAEWEYSCRGGLQNRLFPWGNKLQPKGQHYANIWQGEFPVTNTGEDGFRGTAPVDAFPPNGYGLYNIVGNAWEWTSDWWTVHHSAEETINPKGPPSGKDRVKKGGSYMCHKSYCYRYRCAARSQNTPDSSASNLGFRCAADHLPTTG.

Residues 1–33 (MAAPALGPARGCGAELTLVLLLSLFLLLGWAAG) form the signal peptide. Cys-50 and Cys-52 are joined by a disulfide. The disordered stretch occupies residues 57-102 (RPGAQGSSAAAHRYSREANAPGSVPGGRPSPPTKMVPIPAGVFTMG). Glu-130 serves as a coordination point for Ca(2+). The N-linked (GlcNAc...) asparagine glycan is linked to Asn-141. Disulfide bonds link Cys-218/Cys-365 and Cys-235/Cys-346. Ca(2+) is bound by residues Asn-259, Ile-260, Asp-273, Phe-275, Asn-293, Gly-296, Ala-298, and Glu-300. Positions 336 and 341 each coordinate Cu(2+). The tract at residues 341-360 (CYRYRCAARSQNTPDSSASN) is interaction with sulfatases.

This sequence belongs to the sulfatase-modifying factor family. In terms of assembly, monomer, homodimer and heterodimer with SUMF2. It depends on Cu(2+) as a cofactor. Post-translationally, N-glycosylated. Contains high-mannose-type oligosaccharides.

The protein resides in the endoplasmic reticulum lumen. It carries out the reaction L-cysteinyl-[sulfatase] + 2 a thiol + O2 = an organic disulfide + 3-oxo-L-alanyl-[sulfatase] + hydrogen sulfide + H2O + H(+). The protein operates within protein modification; sulfatase oxidation. Its function is as follows. Oxidase that catalyzes the conversion of cysteine to 3-oxoalanine on target proteins, using molecular oxygen and an unidentified reducing agent. 3-oxoalanine modification, which is also named formylglycine (fGly), occurs in the maturation of arylsulfatases and some alkaline phosphatases that use the hydrated form of 3-oxoalanine as a catalytic nucleophile. Known substrates include GALNS, ARSA, STS and ARSE. In Bos taurus (Bovine), this protein is Formylglycine-generating enzyme.